Consider the following 575-residue polypeptide: Malto-oligosyltrehalose trehalohydrolase (575 aa).

248–253 provides a ligand contact to substrate; sequence RLDAVH. The active-site Nucleophile is the Asp-250. Residue Glu-287 is the Proton donor of the active site. Residues 312 to 316 and 381 to 386 contribute to the substrate site; these read DDVHH and HDQVGN.

Belongs to the glycosyl hydrolase 13 family.

The protein localises to the cytoplasm. The enzyme catalyses hydrolysis of (1-&gt;4)-alpha-D-glucosidic linkage in 4-alpha-D-[(1-&gt;4)-alpha-D-glucanosyl]n trehalose to yield trehalose and (1-&gt;4)-alpha-D-glucan.. Its pathway is glycan biosynthesis; trehalose biosynthesis. The chain is Malto-oligosyltrehalose trehalohydrolase (treZ) from Arthrobacter ramosus.